The chain runs to 916 residues: Extracellular signal-regulated kinase 7 (916 aa).

Positions 25-319 (FDVRKRMGKG…AKEAIRHPYV (295 aa)) constitute a Protein kinase domain. Residues 31–39 (MGKGAYGIV) and lysine 54 each bind ATP. Aspartate 149 functions as the Proton acceptor in the catalytic mechanism. Composition is skewed to polar residues over residues 364 to 376 (CSNRTVSNSTPSS) and 390 to 403 (QARTTSAKQPTTSP). Disordered stretches follow at residues 364 to 419 (CSNR…TQSR), 452 to 477 (PPAAAPPAPAATAPAVPRKSGDKSVP), 588 to 608 (PSETEHRQQREERAYQRQMKR), 711 to 742 (KKLQRSKESDEKDEDDRRALPEGIGGPGSQNY), 792 to 813 (ELNPAPDSGGRDSGSEHSPGRD), and 883 to 916 (CRHRHHKPNHHAPYDHMRPTEDDIQEADSLPESN). 3 stretches are compositionally biased toward basic and acidic residues: residues 590 to 608 (ETEHRQQREERAYQRQMKR), 715 to 730 (RSKESDEKDEDDRRAL), and 800 to 811 (GGRDSGSEHSPG). A compositionally biased stretch (basic residues) spans 883–892 (CRHRHHKPNH). Positions 894 to 903 (APYDHMRPTE) are enriched in basic and acidic residues.

Belongs to the protein kinase superfamily. Ser/Thr protein kinase family.

It carries out the reaction L-seryl-[protein] + ATP = O-phospho-L-seryl-[protein] + ADP + H(+). It catalyses the reaction L-threonyl-[protein] + ATP = O-phospho-L-threonyl-[protein] + ADP + H(+). Functionally, atypical MAPK protein that regulates protein secretion in a kinase activity-dependent manner. In response to starvation regulates protein secretion by mediating transitional endoplasmic reticulum site disassembly. Mediates inhibition of insulin-like peptide secretion upon disturbed ribosome biogenesis and acts as a downstream effector of TP53. The sequence is that of Extracellular signal-regulated kinase 7 from Drosophila melanogaster (Fruit fly).